Reading from the N-terminus, the 262-residue chain is Acyl-[acyl-carrier-protein]--UDP-N-acetylglucosamine O-acyltransferase (262 aa).

This sequence belongs to the transferase hexapeptide repeat family. LpxA subfamily. In terms of assembly, homotrimer.

It is found in the cytoplasm. It catalyses the reaction a (3R)-hydroxyacyl-[ACP] + UDP-N-acetyl-alpha-D-glucosamine = a UDP-3-O-[(3R)-3-hydroxyacyl]-N-acetyl-alpha-D-glucosamine + holo-[ACP]. It functions in the pathway glycolipid biosynthesis; lipid IV(A) biosynthesis; lipid IV(A) from (3R)-3-hydroxytetradecanoyl-[acyl-carrier-protein] and UDP-N-acetyl-alpha-D-glucosamine: step 1/6. Involved in the biosynthesis of lipid A, a phosphorylated glycolipid that anchors the lipopolysaccharide to the outer membrane of the cell. This Burkholderia thailandensis (strain ATCC 700388 / DSM 13276 / CCUG 48851 / CIP 106301 / E264) protein is Acyl-[acyl-carrier-protein]--UDP-N-acetylglucosamine O-acyltransferase.